We begin with the raw amino-acid sequence, 278 residues long: Diaminopimelate epimerase (278 aa).

Substrate-binding residues include Asn13, Gln46, and Asn66. Cys75 functions as the Proton donor in the catalytic mechanism. Substrate-binding positions include 76–77 (GN), Asn159, Asn192, and 210–211 (ER). Cys219 acts as the Proton acceptor in catalysis. 220 to 221 (GT) is a binding site for substrate.

It belongs to the diaminopimelate epimerase family. As to quaternary structure, homodimer.

Its subcellular location is the cytoplasm. It carries out the reaction (2S,6S)-2,6-diaminopimelate = meso-2,6-diaminopimelate. The protein operates within amino-acid biosynthesis; L-lysine biosynthesis via DAP pathway; DL-2,6-diaminopimelate from LL-2,6-diaminopimelate: step 1/1. Functionally, catalyzes the stereoinversion of LL-2,6-diaminopimelate (L,L-DAP) to meso-diaminopimelate (meso-DAP), a precursor of L-lysine and an essential component of the bacterial peptidoglycan. The sequence is that of Diaminopimelate epimerase from Laribacter hongkongensis (strain HLHK9).